The chain runs to 208 residues: Methylthioribulose-1-phosphate dehydratase (208 aa).

Zn(2+) is bound by residues His-99 and His-101.

This sequence belongs to the aldolase class II family. MtnB subfamily. It depends on Zn(2+) as a cofactor.

The catalysed reaction is 5-(methylsulfanyl)-D-ribulose 1-phosphate = 5-methylsulfanyl-2,3-dioxopentyl phosphate + H2O. It participates in amino-acid biosynthesis; L-methionine biosynthesis via salvage pathway; L-methionine from S-methyl-5-thio-alpha-D-ribose 1-phosphate: step 2/6. Its function is as follows. Catalyzes the dehydration of methylthioribulose-1-phosphate (MTRu-1-P) into 2,3-diketo-5-methylthiopentyl-1-phosphate (DK-MTP-1-P). The sequence is that of Methylthioribulose-1-phosphate dehydratase from Aquifex aeolicus (strain VF5).